The primary structure comprises 526 residues: Tyrosine-protein kinase transforming protein Src (526 aa).

The tract at residues 1-52 (MGSSKSKPKDPSQRRHSLEPPDSTHHGGFPASQTPDETAAPDAHRNPSRSFG) is disordered. Residue Gly-2 is the site of N-myristoyl glycine; by host attachment. Positions 7–25 (KPKDPSQRRHSLEPPDSTH) are enriched in basic and acidic residues. SH3 domains follow at residues 71 to 139 (TSPQ…YVAP) and 81 to 142 (GGVT…PSDS). The SH2 domain occupies 148 to 245 (WYFGKITRRE…GLCHRLANVC (98 aa)). A Protein kinase domain is found at 267–517 (LRLEAKLGQG…TFKYLQAQLL (251 aa)). ATP-binding positions include 273-281 (LGQGCFGEV) and Lys-295. Asp-386 serves as the catalytic Proton acceptor. Tyr-416 carries the post-translational modification Phosphotyrosine; by autocatalysis.

It belongs to the protein kinase superfamily. Tyr protein kinase family. SRC subfamily. In terms of assembly, homodimer. In terms of processing, the phosphorylated form is termed pp60v-src.

The catalysed reaction is L-tyrosyl-[protein] + ATP = O-phospho-L-tyrosyl-[protein] + ADP + H(+). In terms of biological role, this phosphoprotein, required for both the initiation and the maintenance of neoplastic transformation, is a protein kinase that catalyzes the phosphorylation of tyrosine residues in vitro. In Gallus gallus (Chicken), this protein is Tyrosine-protein kinase transforming protein Src (V-SRC).